Reading from the N-terminus, the 100-residue chain is Large ribosomal subunit protein eL36B (100 aa).

Belongs to the eukaryotic ribosomal protein eL36 family. In terms of assembly, component of the large ribosomal subunit (LSU). Mature yeast ribosomes consist of a small (40S) and a large (60S) subunit. The 40S small subunit contains 1 molecule of ribosomal RNA (18S rRNA) and 33 different proteins (encoded by 57 genes). The large 60S subunit contains 3 rRNA molecules (25S, 5.8S and 5S rRNA) and 46 different proteins (encoded by 81 genes).

It is found in the cytoplasm. Component of the ribosome, a large ribonucleoprotein complex responsible for the synthesis of proteins in the cell. The small ribosomal subunit (SSU) binds messenger RNAs (mRNAs) and translates the encoded message by selecting cognate aminoacyl-transfer RNA (tRNA) molecules. The large subunit (LSU) contains the ribosomal catalytic site termed the peptidyl transferase center (PTC), which catalyzes the formation of peptide bonds, thereby polymerizing the amino acids delivered by tRNAs into a polypeptide chain. The nascent polypeptides leave the ribosome through a tunnel in the LSU and interact with protein factors that function in enzymatic processing, targeting, and the membrane insertion of nascent chains at the exit of the ribosomal tunnel. This chain is Large ribosomal subunit protein eL36B, found in Saccharomyces cerevisiae (strain ATCC 204508 / S288c) (Baker's yeast).